The chain runs to 135 residues: UPF0299 membrane protein YE2790 (135 aa).

Transmembrane regions (helical) follow at residues 4–24, 30–50, 63–83, and 93–113; these read VTSLGWQYLRAFVIIYLCLWA, LLLPISIPGSILGMLILFALL, GCHLLIRYMALLFVPIGVGVM, and FGPIVVSCFVSTLVVMLVVGY.

Belongs to the UPF0299 family.

Its subcellular location is the cell inner membrane. The protein is UPF0299 membrane protein YE2790 of Yersinia enterocolitica serotype O:8 / biotype 1B (strain NCTC 13174 / 8081).